Consider the following 132-residue polypeptide: Small ribosomal subunit protein uS8 (132 aa).

This sequence belongs to the universal ribosomal protein uS8 family. As to quaternary structure, part of the 30S ribosomal subunit. Contacts proteins S5 and S12.

Its function is as follows. One of the primary rRNA binding proteins, it binds directly to 16S rRNA central domain where it helps coordinate assembly of the platform of the 30S subunit. The polypeptide is Small ribosomal subunit protein uS8 (Latilactobacillus sakei subsp. sakei (strain 23K) (Lactobacillus sakei subsp. sakei)).